We begin with the raw amino-acid sequence, 496 residues long: MERHEQILKEIAFLELRLQSLKLELEFVRSSGSEQKGKIEPFRPNSECSATPMQTAIGKESSNPLMAISLPKAEKKHSKASEVPSPHKTVKEFSEIPKDFLRPNQGIQIPKKNEDHSSSSSKEEKGIQNPKKDFYVVYNGPYAGIYDHWGTAKKATNKIPGVSYKKFKDMLSARTSADIYTNAQFGEKLKYIPGATTSPKSFAEALTTRPSNMKSLGKPKFIKIEEDDDVGFNPEFDLKSFLYIYKYGRNLEEEHFLTDRAFTIDKKEISYLNFVNNSDPEGILESFKAGLVRFIYPSTNLQELRLLPKVLKSSVQRFRKKCIKDSEKEIFLKIKSTIPCWEDYYNGLDDSVSYRPNYLVQIGISKGVNYQPSQKMEAVVLKEQWQGIAEEKAIEFFQAIEDILSNEKIFIIYCDDRILIYSSSPKERTKEDLMAILNFQSEVSSCKLLGFHSDKICSYLNKKASVGKPYSCPQKGKAVITSGPSFSVEDTLSDTE.

Residues 102-128 (RPNQGIQIPKKNEDHSSSSSKEEKGIQ) form a disordered region. The span at 111–128 (KKNEDHSSSSSKEEKGIQ) shows a compositional bias: basic and acidic residues.

The protein belongs to the caulimoviridae viroplasmin family.

The protein localises to the host cytoplasm. Its function is as follows. Enhances the translation of downstream ORFs on polycistronic mRNAs derived from carnation etched ring virus. The protein is Transactivator/viroplasmin protein of Dianthus caryophyllus (Carnation).